A 323-amino-acid polypeptide reads, in one-letter code: Prenyl transferase (323 aa).

Isopentenyl diphosphate contacts are provided by K46, R49, and H81. Mg(2+)-binding residues include D88 and D92. Residue R97 participates in an all-trans-polyprenyl diphosphate binding. R98 contacts isopentenyl diphosphate. Positions 174, 175, and 212 each coordinate an all-trans-polyprenyl diphosphate.

The protein belongs to the FPP/GGPP synthase family. Requires Mg(2+) as cofactor.

It is found in the plastid. The protein localises to the chloroplast. Functionally, possible role in synthesis of the nonaprenyl side chain of plastoquinone or in synthesis of other prenyl chains such as undekaprenyl pyrophosphate. This Cyanidium caldarium (Red alga) protein is Prenyl transferase (preA).